The sequence spans 335 residues: Ferrochelatase (335 aa).

Fe cation is bound by residues H192 and E291.

This sequence belongs to the ferrochelatase family.

It is found in the cytoplasm. The enzyme catalyses heme b + 2 H(+) = protoporphyrin IX + Fe(2+). It functions in the pathway porphyrin-containing compound metabolism; protoheme biosynthesis; protoheme from protoporphyrin-IX: step 1/1. Its function is as follows. Catalyzes the ferrous insertion into protoporphyrin IX. This Bdellovibrio bacteriovorus (strain ATCC 15356 / DSM 50701 / NCIMB 9529 / HD100) protein is Ferrochelatase.